Here is a 120-residue protein sequence, read N- to C-terminus: BLOC-1-related complex subunit 8 (120 aa).

The disordered stretch occupies residues 101-120; sequence MNTSAQGHSQEKLSPPPSLA. Ser109 carries the post-translational modification Phosphoserine.

The protein belongs to the BORCS8 family. Component of the BLOC-one-related complex (BORC) which is composed of BLOC1S1, BLOC1S2, BORCS5, BORCS6, BORCS7, BORCS8, KXD1 and SNAPIN.

The protein localises to the lysosome membrane. Functionally, as part of the BLOC-one-related complex (BORC), it plays a role in the movement and localization of lysosomes at the cell periphery. Associated with the cytosolic face of lysosomes, BORC recruits ARL8B to the lysosomal membrane and couples lysosomes to microtubule plus-end-directed kinesin motors, driving lysosome movement toward the cell periphery. This is BLOC-1-related complex subunit 8 from Mus musculus (Mouse).